A 741-amino-acid polypeptide reads, in one-letter code: 1,4-alpha-glucan branching enzyme GlgB (741 aa).

The Nucleophile role is filled by aspartate 420. Glutamate 473 serves as the catalytic Proton donor.

This sequence belongs to the glycosyl hydrolase 13 family. GlgB subfamily. As to quaternary structure, monomer.

It carries out the reaction Transfers a segment of a (1-&gt;4)-alpha-D-glucan chain to a primary hydroxy group in a similar glucan chain.. The protein operates within glycan biosynthesis; glycogen biosynthesis. Functionally, catalyzes the formation of the alpha-1,6-glucosidic linkages in glycogen by scission of a 1,4-alpha-linked oligosaccharide from growing alpha-1,4-glucan chains and the subsequent attachment of the oligosaccharide to the alpha-1,6 position. This is 1,4-alpha-glucan branching enzyme GlgB from Pseudomonas syringae pv. tomato (strain ATCC BAA-871 / DC3000).